The chain runs to 574 residues: MRESNVSIVWNNKASVTINTVLYDRRALDCDSEMSLMNSLSHLVYLTSTSPKIREILTMDGGLMRLMNILRAGRGQTFARMTIWQLALQCVVNVGIRGSEAIRIRVVEAGIVPIVVTLLDDFLFALESVVSHHSRFQFSLTPSTTPPPSSASAPFPINSNISNSLDSVSQHNSSADSLFVNGDVPSPFGASTASSSSRRVYSVDLRDSGDVQLPNQSTFRHSVNRDLLGSSSTTSHDRSSGSIYSNDSFQDPRVQANSPLTIQRISSAAPSTPTSTENVNYNMTTPSSPSYSRQTGPASETINDEIDSPNFFFPTPLNIMTTTQDSSRDVQLSLNNVQSQALNNRQRRNQLLPGVPSTSALLDGRRPENVVDYHGIASFFDNFDKKINKLPREEDILFGLQILAYTSKNYFHMRPYFESSKDVPSLRMSPLRSGSKTWNIFQLVEQFTLKFYPPQVQYWARAIMNNYCRKDESHGGIRRCANLLCNKWEEHSRQFAKCRRCRRTKYCSKECQHQAWPGHSRWCRVIHKDGRNSKRESSKINSVTESESTASPAASVIPVGTESVTSSTQSDSRL.

2 disordered regions span residues 207–253 and 283–307; these read DSGD…QDPR and MTTP…DEID. Composition is skewed to polar residues over residues 243–253 and 283–301; these read IYSNDSFQDPR and MTTP…ASET. The MYND-type; degenerate zinc finger occupies 482-523; that stretch reads NLLCNKWEEHSRQFAKCRRCRRTKYCSKECQHQAWPGHSRWC. The Zn(2+) site is built by Cys-498, Cys-501, His-519, and Cys-523. A disordered region spans residues 534–574; that stretch reads KRESSKINSVTESESTASPAASVIPVGTESVTSSTQSDSRL. Residues 542 to 556 are compositionally biased toward low complexity; the sequence is SVTESESTASPAASV. Positions 562 to 574 are enriched in polar residues; sequence ESVTSSTQSDSRL.

The protein belongs to the MUB1/samB family.

It localises to the nucleus. The protein resides in the cytoplasm. It is found in the cytoskeleton. The protein localises to the microtubule organizing center. Its subcellular location is the spindle pole body. In Schizosaccharomyces pombe (strain 972 / ATCC 24843) (Fission yeast), this protein is MYND-type zinc finger protein C31F10.10c.